The chain runs to 242 residues: ATP synthase subunit a (242 aa).

6 consecutive transmembrane segments (helical) span residues 29–49 (SSIY…LAFY), 84–104 (FIPL…LGMT), 114–134 (IIVT…VGFV), 140–160 (FLTL…MIVI), 181–201 (MAGH…MIYL), and 203–223 (FLPI…AILQ).

Belongs to the ATPase A chain family. In terms of assembly, F-type ATPases have 2 components, CF(1) - the catalytic core - and CF(0) - the membrane proton channel. CF(1) has five subunits: alpha(3), beta(3), gamma(1), delta(1), epsilon(1). CF(0) has three main subunits: a(1), b(2) and c(9-12). The alpha and beta chains form an alternating ring which encloses part of the gamma chain. CF(1) is attached to CF(0) by a central stalk formed by the gamma and epsilon chains, while a peripheral stalk is formed by the delta and b chains.

It is found in the cell inner membrane. Key component of the proton channel; it plays a direct role in the translocation of protons across the membrane. In Rickettsia conorii (strain ATCC VR-613 / Malish 7), this protein is ATP synthase subunit a.